Here is a 167-residue protein sequence, read N- to C-terminus: MDHGFYPSNLDGEGLRIGIVQARFNEPVCAELLEACVAELEKLGVEGEDTLVVTVPGALEVPLALQKMAESGQFDALVALGAVVRGETYHFELVSNESGAGITRVGLDFNMPVANGILTVDTDEQAHARTREKGRDCARAAVEMANLVVALDSLRDQEDEEDEDDDE.

5-amino-6-(D-ribitylamino)uracil is bound by residues Phe-24, 58-60, and 82-84; these read ALE and AVV. 87 to 88 provides a ligand contact to (2S)-2-hydroxy-3-oxobutyl phosphate; that stretch reads ET. His-90 functions as the Proton donor in the catalytic mechanism. A 5-amino-6-(D-ribitylamino)uracil-binding site is contributed by Asn-115. Arg-129 serves as a coordination point for (2S)-2-hydroxy-3-oxobutyl phosphate.

Belongs to the DMRL synthase family.

The catalysed reaction is (2S)-2-hydroxy-3-oxobutyl phosphate + 5-amino-6-(D-ribitylamino)uracil = 6,7-dimethyl-8-(1-D-ribityl)lumazine + phosphate + 2 H2O + H(+). It functions in the pathway cofactor biosynthesis; riboflavin biosynthesis; riboflavin from 2-hydroxy-3-oxobutyl phosphate and 5-amino-6-(D-ribitylamino)uracil: step 1/2. Functionally, catalyzes the formation of 6,7-dimethyl-8-ribityllumazine by condensation of 5-amino-6-(D-ribitylamino)uracil with 3,4-dihydroxy-2-butanone 4-phosphate. This is the penultimate step in the biosynthesis of riboflavin. This chain is 6,7-dimethyl-8-ribityllumazine synthase, found in Cupriavidus pinatubonensis (strain JMP 134 / LMG 1197) (Cupriavidus necator (strain JMP 134)).